The primary structure comprises 507 residues: Histidine ammonia-lyase (507 aa).

The segment at residues 141-143 (ASG) is a cross-link (5-imidazolinone (Ala-Gly)). S142 bears the 2,3-didehydroalanine (Ser) mark.

It belongs to the PAL/histidase family. Post-translationally, contains an active site 4-methylidene-imidazol-5-one (MIO), which is formed autocatalytically by cyclization and dehydration of residues Ala-Ser-Gly.

It localises to the cytoplasm. The enzyme catalyses L-histidine = trans-urocanate + NH4(+). It functions in the pathway amino-acid degradation; L-histidine degradation into L-glutamate; N-formimidoyl-L-glutamate from L-histidine: step 1/3. The polypeptide is Histidine ammonia-lyase (Burkholderia ambifaria (strain MC40-6)).